The primary structure comprises 65 residues: Small ribosomal subunit protein eS27 (65 aa).

4 residues coordinate Zn(2+): Cys-21, Cys-24, Cys-40, and Cys-43. A C4-type zinc finger spans residues 21 to 43; it reads CKDCGNVQVVFARPSSVVTCNIC.

The protein belongs to the eukaryotic ribosomal protein eS27 family. As to quaternary structure, part of the 30S ribosomal subunit. Zn(2+) is required as a cofactor.

This Thermoplasma volcanium (strain ATCC 51530 / DSM 4299 / JCM 9571 / NBRC 15438 / GSS1) protein is Small ribosomal subunit protein eS27.